The chain runs to 724 residues: Coiled-coil domain-containing protein 175 (724 aa).

5 coiled-coil regions span residues 131–164 (VEMS…NTAL), 203–256 (INLE…RKET), 282–373 (VVLS…RQYK), 426–534 (ELHR…ERKL), and 565–627 (QLQV…QLRE).

The protein is Coiled-coil domain-containing protein 175 (CCDC175) of Bos taurus (Bovine).